The following is a 665-amino-acid chain: tRNA 5-methylaminomethyl-2-thiouridine biosynthesis bifunctional protein MnmC (665 aa).

Residues 1 to 235 form a tRNA (mnm(5)s(2)U34)-methyltransferase region; sequence MTITRHAQID…KWEVLRGTFI (235 aa). The interval 266–665 is FAD-dependent cmnm(5)s(2)U34 oxidoreductase; sequence IGAGLAGCAT…RGKGKQTVGH (400 aa).

It in the N-terminal section; belongs to the methyltransferase superfamily. tRNA (mnm(5)s(2)U34)-methyltransferase family. The protein in the C-terminal section; belongs to the DAO family. FAD is required as a cofactor.

Its subcellular location is the cytoplasm. It carries out the reaction 5-aminomethyl-2-thiouridine(34) in tRNA + S-adenosyl-L-methionine = 5-methylaminomethyl-2-thiouridine(34) in tRNA + S-adenosyl-L-homocysteine + H(+). Catalyzes the last two steps in the biosynthesis of 5-methylaminomethyl-2-thiouridine (mnm(5)s(2)U) at the wobble position (U34) in tRNA. Catalyzes the FAD-dependent demodification of cmnm(5)s(2)U34 to nm(5)s(2)U34, followed by the transfer of a methyl group from S-adenosyl-L-methionine to nm(5)s(2)U34, to form mnm(5)s(2)U34. This chain is tRNA 5-methylaminomethyl-2-thiouridine biosynthesis bifunctional protein MnmC, found in Pseudomonas syringae pv. syringae (strain B728a).